The following is a 429-amino-acid chain: Enolase (429 aa).

Glutamine 165 lines the (2R)-2-phosphoglycerate pocket. The Proton donor role is filled by glutamate 207. Mg(2+) is bound by residues aspartate 244, glutamate 287, and aspartate 314. The (2R)-2-phosphoglycerate site is built by lysine 339, arginine 368, serine 369, and lysine 390. Lysine 339 serves as the catalytic Proton acceptor.

This sequence belongs to the enolase family. Requires Mg(2+) as cofactor.

Its subcellular location is the cytoplasm. The protein resides in the secreted. It is found in the cell surface. It carries out the reaction (2R)-2-phosphoglycerate = phosphoenolpyruvate + H2O. The protein operates within carbohydrate degradation; glycolysis; pyruvate from D-glyceraldehyde 3-phosphate: step 4/5. Functionally, catalyzes the reversible conversion of 2-phosphoglycerate (2-PG) into phosphoenolpyruvate (PEP). It is essential for the degradation of carbohydrates via glycolysis. This chain is Enolase, found in Roseiflexus castenholzii (strain DSM 13941 / HLO8).